The chain runs to 355 residues: Anthranilate phosphoribosyltransferase (355 aa).

Residues Gly85, 88–89, Thr93, 95–98, 113–121, and Ser125 each bind 5-phospho-alpha-D-ribose 1-diphosphate; these read GD, NIST, and KHGNRAASS. Gly85 is an anthranilate binding site. Ser97 lines the Mg(2+) pocket. Residue Asn116 coordinates anthranilate. Residue Arg171 participates in anthranilate binding. The Mg(2+) site is built by Asp229 and Glu230.

It belongs to the anthranilate phosphoribosyltransferase family. As to quaternary structure, homodimer. The cofactor is Mg(2+).

It catalyses the reaction N-(5-phospho-beta-D-ribosyl)anthranilate + diphosphate = 5-phospho-alpha-D-ribose 1-diphosphate + anthranilate. Its pathway is amino-acid biosynthesis; L-tryptophan biosynthesis; L-tryptophan from chorismate: step 2/5. In terms of biological role, catalyzes the transfer of the phosphoribosyl group of 5-phosphorylribose-1-pyrophosphate (PRPP) to anthranilate to yield N-(5'-phosphoribosyl)-anthranilate (PRA). The protein is Anthranilate phosphoribosyltransferase of Acidothermus cellulolyticus (strain ATCC 43068 / DSM 8971 / 11B).